A 389-amino-acid polypeptide reads, in one-letter code: MALTPESPSSFPGLAATGSSVPEPPGGPNATLNSSWASPTEPSSLEDLVATGTIGTLLSAMGVVGVVGNAYTLVVTCRSLRAVASMYVYVVNLALADLLYLLSIPFIVATYVTKEWHFGDVGCRVLFGLDFLTMHASIFTLTVMSSERYAAVLRPLDTVQRPKGYRKLLALGTWLLALLLTLPVMLAMRLVRRGPKSLCLPAWGPRAHRAYLTLLFATSIAGPGLLIGLLYARLARAYRRSQRASFKRARRPGARALRLVLGIVLLFWACFLPFWLWQLLAQYHQAPLAPRTARIVNYLTTCLTYGNSCANPFLYTLLTRNYRDHLRGRVRGPGSGGGRGPVPSLQPRARFQRCSGRSLSSCSPQPTDSLVLAPAAPARPAPEGPRAPA.

The span at 1 to 10 (MALTPESPSS) shows a compositional bias: polar residues. The interval 1 to 39 (MALTPESPSSFPGLAATGSSVPEPPGGPNATLNSSWASP) is disordered. Residues 1–54 (MALTPESPSSFPGLAATGSSVPEPPGGPNATLNSSWASPTEPSSLEDLVATGTI) are Extracellular-facing. 2 N-linked (GlcNAc...) asparagine glycosylation sites follow: asparagine 29 and asparagine 33. Polar residues predominate over residues 30 to 39 (ATLNSSWASP). Residues 55–77 (GTLLSAMGVVGVVGNAYTLVVTC) traverse the membrane as a helical segment. Over 78–87 (RSLRAVASMY) the chain is Cytoplasmic. Residues 88 to 113 (VYVVNLALADLLYLLSIPFIVATYVT) form a helical membrane-spanning segment. The Extracellular segment spans residues 114–124 (KEWHFGDVGCR). A disulfide bridge links cysteine 123 with cysteine 199. Residues 125–146 (VLFGLDFLTMHASIFTLTVMSS) traverse the membrane as a helical segment. The Cytoplasmic segment spans residues 147 to 167 (ERYAAVLRPLDTVQRPKGYRK). A helical transmembrane segment spans residues 168–186 (LLALGTWLLALLLTLPVML). At 187 to 209 (AMRLVRRGPKSLCLPAWGPRAHR) the chain is on the extracellular side. A helical membrane pass occupies residues 210-232 (AYLTLLFATSIAGPGLLIGLLYA). At 233 to 258 (RLARAYRRSQRASFKRARRPGARALR) the chain is on the cytoplasmic side. The chain crosses the membrane as a helical span at residues 259-284 (LVLGIVLLFWACFLPFWLWQLLAQYH). The Extracellular portion of the chain corresponds to 285–297 (QAPLAPRTARIVN). A helical transmembrane segment spans residues 298–318 (YLTTCLTYGNSCANPFLYTLL). Residues 319 to 389 (TRNYRDHLRG…PAPEGPRAPA (71 aa)) are Cytoplasmic-facing. The disordered stretch occupies residues 328–389 (GRVRGPGSGG…PAPEGPRAPA (62 aa)). The span at 331–340 (RGPGSGGGRG) shows a compositional bias: gly residues. The segment covering 355–368 (SGRSLSSCSPQPTD) has biased composition (polar residues). Residues 377–389 (PARPAPEGPRAPA) show a composition bias toward pro residues.

It belongs to the G-protein coupled receptor 1 family. As to expression, most abundant expression in the heart and pancreas.

It localises to the cell membrane. Its function is as follows. High affinity receptor for urotensin-2 and urotensin-2B. The activity of this receptor is mediated by a G-protein that activate a phosphatidylinositol-calcium second messenger system. The sequence is that of Urotensin-2 receptor (UTS2R) from Homo sapiens (Human).